The primary structure comprises 119 residues: Ribosome-binding factor A (119 aa).

It belongs to the RbfA family. Monomer. Binds 30S ribosomal subunits, but not 50S ribosomal subunits or 70S ribosomes.

The protein localises to the cytoplasm. In terms of biological role, one of several proteins that assist in the late maturation steps of the functional core of the 30S ribosomal subunit. Associates with free 30S ribosomal subunits (but not with 30S subunits that are part of 70S ribosomes or polysomes). Required for efficient processing of 16S rRNA. May interact with the 5'-terminal helix region of 16S rRNA. The sequence is that of Ribosome-binding factor A from Wolinella succinogenes (strain ATCC 29543 / DSM 1740 / CCUG 13145 / JCM 31913 / LMG 7466 / NCTC 11488 / FDC 602W) (Vibrio succinogenes).